Reading from the N-terminus, the 769-residue chain is Apoptotic enhancer 1 protein (769 aa).

3 disordered regions span residues 69 to 88, 265 to 396, and 451 to 518; these read PVRV…SQQY, SVEP…LDES, and PQLP…RSDD. Over residues 275-284 the composition is skewed to low complexity; the sequence is QQQQPSPQMM. A compositionally biased stretch (basic and acidic residues) spans 285–295; that stretch reads KSEEFSEKRDL. The segment covering 339 to 353 has biased composition (low complexity); it reads STDPHSNHSSPSTSS. Composition is skewed to polar residues over residues 354 to 378, 453 to 467, and 474 to 491; these read QKAP…TMTR, LPTS…TSET, and NSES…NNLE. ANK repeat units lie at residues 585 to 617 and 618 to 652; these read EGIT…AQDS and DGWT…TLSD. The SH3 domain occupies 684-746; it reads INTGKVYAAY…PRTYLALYPS (63 aa).

It belongs to the iASPP family. In terms of assembly, interacts with cep-1/p53; the interaction inhibits pro-apoptotic activity of cep-1.

The protein resides in the nucleus. Its function is as follows. Negetively regulates apoptosis via its interaction with cep-1. This Caenorhabditis elegans protein is Apoptotic enhancer 1 protein.